The following is a 286-amino-acid chain: MAVGKEIRTQISSINNTRKITRAMEKVAASKTRKAQDRMAASRPYAERIRQVVGHLANANPEYKHRYLTEREAKRVGYIVISSDRGLCGGLNVNVFKKAIRDMKQFADTGVEIDICAIGSKAVSFFRNYGGNVTAAHTGLGDAPKADDLVGSVKVMLDAFDEGRIDRLYVVSNEFVNTMTQNPTVEQLLPLKAEENTELKHHWDYIYEPEAVEILDELLVRYIESQVYQSVVENIACEQAARMLAMKNATDNAGDIIDELQLVYNKARQAAITQEISEIVSGAAAV.

It belongs to the ATPase gamma chain family. F-type ATPases have 2 components, CF(1) - the catalytic core - and CF(0) - the membrane proton channel. CF(1) has five subunits: alpha(3), beta(3), gamma(1), delta(1), epsilon(1). CF(0) has three main subunits: a, b and c.

Its subcellular location is the cell inner membrane. Produces ATP from ADP in the presence of a proton gradient across the membrane. The gamma chain is believed to be important in regulating ATPase activity and the flow of protons through the CF(0) complex. The chain is ATP synthase gamma chain from Marinomonas sp. (strain MWYL1).